Here is a 778-residue protein sequence, read N- to C-terminus: Glutathione biosynthesis bifunctional protein GshAB (778 aa).

The interval 1–354 (MVNLDKGLLK…EEFFKNHDMV (354 aa)) is glutamate--cysteine ligase. The ATP-grasp domain occupies 521 to 777 (KDILRENNIR…AGEKILDLLF (257 aa)). Residue 548-606 (RLFKDEKIVIKPKSTNFGLGISIFPGEYSREDYDKAVEIAFREDSSILIEEFMTGKEYR) participates in ATP binding. Mg(2+) contacts are provided by Asp-728, Glu-747, and Asn-749. Positions 728, 747, and 749 each coordinate Mn(2+).

It in the N-terminal section; belongs to the glutamate--cysteine ligase type 1 family. Type 2 subfamily. As to quaternary structure, monomer. Mg(2+) is required as a cofactor. Mn(2+) serves as cofactor.

It catalyses the reaction L-cysteine + L-glutamate + ATP = gamma-L-glutamyl-L-cysteine + ADP + phosphate + H(+). It carries out the reaction gamma-L-glutamyl-L-cysteine + glycine + ATP = glutathione + ADP + phosphate + H(+). It participates in sulfur metabolism; glutathione biosynthesis; glutathione from L-cysteine and L-glutamate: step 1/2. It functions in the pathway sulfur metabolism; glutathione biosynthesis; glutathione from L-cysteine and L-glutamate: step 2/2. Functionally, synthesizes glutathione from L-glutamate and L-cysteine via gamma-L-glutamyl-L-cysteine. This Clostridium perfringens (strain 13 / Type A) protein is Glutathione biosynthesis bifunctional protein GshAB.